The chain runs to 485 residues: Amino acid permease 1 (485 aa).

Over residues 1–15 (MKSFNTEGHNHSTAE) the composition is skewed to polar residues. The interval 1–35 (MKSFNTEGHNHSTAESGDAYTVSDPTKNVDEDGRE) is disordered. The Cytoplasmic portion of the chain corresponds to 1–40 (MKSFNTEGHNHSTAESGDAYTVSDPTKNVDEDGREKRTGT). A run of 2 helical transmembrane segments spans residues 41–61 (WLTA…LSLA) and 62–82 (WAIA…FSFI). Residues 83-129 (TYFTSTMLADCYRAPDPVTGKRNYTYMDVVRSYLGGRKVQLCGVAQY) are Cytoplasmic-facing. A helical membrane pass occupies residues 130-150 (GNLIGVTVGYTITASISLVAV). Residues 151-166 (GKSNCFHDKGHTADCT) lie on the Extracellular side of the membrane. A helical transmembrane segment spans residues 167–187 (ISNYPYMAVFGIIQVILSQIP). Residues 188 to 194 (NFHKLSF) are Cytoplasmic-facing. The chain crosses the membrane as a helical span at residues 195 to 215 (LSIMAAVMSFTYATIGIGLAI). At 216-245 (ATVAGGKVGKTSMTGTAVGVDVTAAQKIWR) the chain is on the extracellular side. Residues 246 to 266 (SFQAVGDIAFAYAYATVLIEI) traverse the membrane as a helical segment. Topologically, residues 267 to 285 (QDTLRSSPAENKAMKRASL) are cytoplasmic. Residues 286–306 (VGVSTTTFFYILCGCIGYAAF) traverse the membrane as a helical segment. Residues 307–318 (GNNAPGDFLTDF) lie on the Extracellular side of the membrane. The helical transmembrane segment at 319-339 (GFFEPFWLIDFANACIAVHLI) threads the bilayer. The Cytoplasmic portion of the chain corresponds to 340-394 (GAYQVFAQPIFQFVEKKCNRNYPDNKFITSEYSVNVPFLGKFNISLFRLVWRTAY). A run of 2 helical transmembrane segments spans residues 395–415 (VVIT…LGLI) and 416–436 (GAAS…IAQT). Residues 437 to 450 (KIKKYSARWIALKT) are Cytoplasmic-facing. A helical transmembrane segment spans residues 451–471 (MCYVCLIVSLLAAAGSIAGLI). The Extracellular segment spans residues 472–485 (SSVKTYKPFRTMHE).

The protein belongs to the amino acid/polyamine transporter 2 family. Amino acid/auxin permease (AAAP) (TC 2.A.18.2) subfamily. As to expression, highly expressed in developing pods. Found in the endosperm and in the storage parenchyma and the outer epidermis cells of the developing embryo. Lower levels of expression in flowers, in the vascular system of the cotyledon and in the root epidermal cells, including root hairs and throughout the root tip.

It is found in the cell membrane. Its activity is regulated as follows. Inhibited by carbonylcyanide m-chlorophenylhydrazone and diethylpyrocarbonate (DEPC). Functionally, amino acid-proton symporter. Stereospecific transporter with a broad specificity for histidine, glutamate and neutral amino acids. Reduced affinities for asparagine and valine. Involved in amino acid uptake from the apoplastic cavity into the embryo cells for storage protein accumulation and in root amino acid uptake. This chain is Amino acid permease 1 (AAP1), found in Arabidopsis thaliana (Mouse-ear cress).